The following is a 308-amino-acid chain: Ribosomal protein L11 methyltransferase (308 aa).

Residues threonine 157, glycine 178, aspartate 200, and asparagine 243 each coordinate S-adenosyl-L-methionine.

It belongs to the methyltransferase superfamily. PrmA family.

It is found in the cytoplasm. It catalyses the reaction L-lysyl-[protein] + 3 S-adenosyl-L-methionine = N(6),N(6),N(6)-trimethyl-L-lysyl-[protein] + 3 S-adenosyl-L-homocysteine + 3 H(+). In terms of biological role, methylates ribosomal protein L11. This chain is Ribosomal protein L11 methyltransferase, found in Pelotomaculum thermopropionicum (strain DSM 13744 / JCM 10971 / SI).